Consider the following 55-residue polypeptide: Mitochondrial import receptor subunit TOM7 homolog (55 aa).

Residues 1–20 (MVKLSKEAKQRLQQLFKGGQ) lie on the Cytoplasmic side of the membrane. Residues 21-36 (FAIRWGFIPLVIYLGF) traverse the membrane as a helical segment. The Mitochondrial intermembrane segment spans residues 37-55 (KRGADPGMPEPTVLSLLWG).

Belongs to the Tom7 family. In terms of assembly, forms part of the preprotein translocase complex of the outer mitochondrial membrane (TOM complex) which consists of at least 7 different proteins (TOMM5, TOMM6, TOMM7, TOMM20, TOMM22, TOMM40 and TOMM70).

It is found in the mitochondrion outer membrane. Its function is as follows. Required for assembly and stability of the TOM complex. Positive regulator of PRKN translocation to damaged mitochondria. Acts probably by stabilizing PINK1 on the outer membrane of depolarized mitochondria. The polypeptide is Mitochondrial import receptor subunit TOM7 homolog (TOMM7) (Bos taurus (Bovine)).